The following is a 369-amino-acid chain: MRKLTQFCLGLMLLPIAAVAQNQPTMKDVLGKYFLVGTALNSHQIWTHDPKIVHAITDNFNSVVAENCMKGEIIHPEEDYYDWHDADQLVKFAEQHKMTVHGHCLVWHSQAPKWMFTDKEGKEVTREVLIDRMYHHITNVVKRYKGKIKGWDVVNEAILDNGEYRQSPYYKIIGPDFIKLAFIFAHQADPDAELYYNDYSMSIPAKRNAVVKLVKELKAAGCRIDAVGMQSHNGFNYPNLEDYENSIKAFIAAGVDVQFTELDVNMLPNPKSFGGAEISQNYKYNKELNPYVNGLTKAAQKTFDQQYLSFFKIYRKYVDHIKRVTVWGVDDGSSWLNGWPVPGRTNYGLLIDRNYKVKPVVKEIIKLYE.

Residues 1 to 20 (MRKLTQFCLGLMLLPIAAVA) form the signal peptide. Positions 21–367 (QNQPTMKDVL…KPVVKEIIKL (347 aa)) constitute a GH10 domain. Glu-156 acts as the Proton donor in catalysis. Glu-261 (nucleophile) is an active-site residue.

The protein belongs to the glycosyl hydrolase 10 (cellulase F) family.

The catalysed reaction is Endohydrolysis of (1-&gt;4)-beta-D-xylosidic linkages in xylans.. Its pathway is glycan degradation; xylan degradation. The polypeptide is Endo-1,4-beta-xylanase A (xynA) (Xylanibacter ruminicola (Prevotella ruminicola)).